The primary structure comprises 397 residues: UPF0261 protein mlr3387 (397 aa).

The protein belongs to the UPF0261 family.

The protein is UPF0261 protein mlr3387 of Mesorhizobium japonicum (strain LMG 29417 / CECT 9101 / MAFF 303099) (Mesorhizobium loti (strain MAFF 303099)).